The sequence spans 512 residues: MKAGCSMVEKPEGGGGYQFPDWAYKTESSPGSXXIQLWHFILELLQKEEFRHVIAWQQGEYGEFVIKDPDEVARLWGRRKCKPQMNYDKLSRALRYYYNKRILHKTKGKRFTYKFNFNKLVMPNYPFINIRSSGVVPQSAPPVPTASSRFHFPPLDTHSPTSDVQPGRFSASSLTASGQESSNGTDRKAELSXLEDGSAADWRRGVDLMSSRNAVGGGGISHQKRKPDIMLPLFARPGMYPDPHSPFAVSPIPGRGGVLNVPISPALSLTPTIFSYSPSPGLSPFTSSSCFSFNPEEMKHYLHSQACSVFNYHLSPRTFPRYPGLMVPPLQCQMHPEESTQFSIKLQPPPVGRKNRERVESSEESAPVTVPTMAPIPPRIKVEPASEKDAESLRQSAREKEEHTXEEGTVPSRTIEEEKGTIFARPAAPPIWPSVPISTPSEEPLEVTEDIEDRPGKEPSAPEKKEDALMPPKLRLKRRWNDDPEARELSKSGKFLWNGSGPQGLATAAADA.

The ETS DNA-binding region spans I35–N116. The disordered stretch occupies residues Q138 to D196. S139, S159, and S315 each carry phosphoserine. The span at H158 to G184 shows a compositional bias: polar residues. Residues Q341 to A512 are disordered. Residues I380–E406 are compositionally biased toward basic and acidic residues. K381 participates in a covalent cross-link: Glycyl lysine isopeptide (Lys-Gly) (interchain with G-Cter in SUMO2). An N6-acetyllysine; alternate modification is found at K388. A Glycyl lysine isopeptide (Lys-Gly) (interchain with G-Cter in SUMO2); alternate cross-link involves residue K388. A compositionally biased stretch (acidic residues) spans E443 to E452. 2 stretches are compositionally biased toward basic and acidic residues: residues D453 to A468 and R479 to K491.

Belongs to the ETS family.

It localises to the nucleus. In terms of biological role, transcriptional repressor that contribute to growth arrest during terminal macrophage differentiation by repressing target genes involved in Ras-dependent proliferation. Represses MMP1 promoter activity. The protein is ETS translocation variant 3 (ETV3) of Ateles geoffroyi (Black-handed spider monkey).